We begin with the raw amino-acid sequence, 1456 residues long: Macrophage mannose receptor 1 (1456 aa).

The signal sequence occupies residues 1-18 (MRLPLLLVFASVIPGAVL). Residues 19-1389 (LLDTRQFLIY…DPSKPSSNVA (1371 aa)) are Extracellular-facing. The Ricin B-type lectin domain maps to 22–142 (TRQFLIYNED…SGLWSRWKIY (121 aa)). 2 disulfides stabilise this stretch: Cys35–Cys49 and Cys74–Cys91. Asn104 carries N-linked (GlcNAc...) asparagine glycosylation. A Fibronectin type-II domain is found at 163 to 211 (ANGATCAFPFKFENKWYADCTSAGRSDGWLWCGTTTDYDTDKLFGYCPL). Disulfide bonds link Cys168–Cys194, Cys182–Cys209, Cys247–Cys340, and Cys316–Cys332. In terms of domain architecture, C-type lectin 1 spans 225–341 (LTSVSYQINS…CVQKLGYICK (117 aa)). A glycan (N-linked (GlcNAc...) asparagine) is linked at Asn344. 4 C-type lectin domains span residues 369–487 (YAGH…YICK), 511–626 (HHFY…FVCK), 655–778 (RTSL…WICQ), and 807–923 (YKDY…FICQ). 2 disulfide bridges follow: Cys391–Cys486 and Cys463–Cys478. The N-linked (GlcNAc...) asparagine glycan is linked to Asn529. 7 disulfides stabilise this stretch: Cys532/Cys625, Cys600/Cys617, Cys646/Cys659, Cys680/Cys777, Cys753/Cys769, Cys828/Cys922, and Cys899/Cys914. Residues Asn926 and Asn930 are each glycosylated (N-linked (GlcNAc...) asparagine). C-type lectin domains lie at 952–1080 (YSNK…YICQ), 1102–1213 (YGKS…FLCK), and 1241–1356 (FHGH…YICK). Intrachain disulfides connect Cys977–Cys1079, Cys1052–Cys1071, Cys1123–Cys1212, Cys1190–Cys1204, Cys1263–Cys1355, and Cys1332–Cys1347. N-linked (GlcNAc...) asparagine glycosylation occurs at Asn1160. An N-linked (GlcNAc...) asparagine glycan is attached at Asn1205. Residues 1390-1410 (GVVIIVILLILTGAGLAAYFF) traverse the membrane as a helical segment. At 1411–1456 (YKKRRVHLPQEGAFENTLYFNSQSSPGTSDMKDLVGNIEQNEHSVI) the chain is on the cytoplasmic side.

As to quaternary structure, (Microbial infection) Interacts with Dengue virus. In terms of assembly, (Microbial infection) May act as a receptor for hepatitis B virus, enabling uptake of the virus in hepatic dendritic cells.

The protein resides in the endosome membrane. The protein localises to the cell membrane. Its function is as follows. Mediates the endocytosis of glycoproteins by macrophages. Binds both sulfated and non-sulfated polysaccharide chains. In terms of biological role, (Microbial infection) Acts as a phagocytic receptor for bacteria, fungi and other pathogens. Functionally, (Microbial infection) Acts as a receptor for Dengue virus envelope protein E. (Microbial infection) Interacts with Hepatitis B virus envelope protein. This is Macrophage mannose receptor 1 (MRC1) from Homo sapiens (Human).